Here is a 116-residue protein sequence, read N- to C-terminus: MLSCRLQCALAALSIVLALGGVTGAPSDPRLRQFLQKSLAAAAGKQELAKYFLAELLSEPNQTEIDALEPEDLSQAAEQDEMRLELQRSANSNPAMAPRERKAGCKNFFWKTFTSC.

Residues 1-24 (MLSCRLQCALAALSIVLALGGVTG) form the signal peptide. A propeptide spanning residues 25–88 (APSDPRLRQF…QDEMRLELQR (64 aa)) is cleaved from the precursor. The residue at position 43 (alanine 43) is an Alanine amide. The cysteines at positions 105 and 116 are disulfide-linked.

Belongs to the somatostatin family. C-terminal amidation of the neuronostatin peptide is required for its biological activity, including for the regulation of mean arterial pressure.

The protein localises to the secreted. Its function is as follows. Inhibits the secretion of pituitary hormones, including that of growth hormone/somatotropin (GH1), PRL, ACTH, luteinizing hormone (LH) and TSH. Also impairs ghrelin- and GnRH-stimulated secretion of GH1 and LH; the inhibition of ghrelin-stimulated secretion of GH1 can be further increased by neuronostatin. May enhance low-glucose-induced glucagon release by pancreatic alpha cells. This effect may be mediated by binding to GPR107 and PKA activation. May regulate cardiac contractile function. May compromise cardiomyocyte viability. In the central nervous system, may impair memory retention and may affect hippocampal excitability. May also have anxiolytic and anorexigenic effects. May play a role in arterial pressure regulation. May inhibit basal, but not ghrelin- or GnRH-stimulated secretion of GH1 or LH, but does not affect the release of other pituitary hormones, including PRL, ACTH, FSH or TSH. Potentiates inhibitory action of somatostatin on ghrelin-stimulated secretion of GH1, but not that on GnRH-stimulated secretion of LH. The sequence is that of Somatostatin (SST) from Bos taurus (Bovine).